Reading from the N-terminus, the 74-residue chain is ATP synthase subunit 9, mitochondrial (74 aa).

A run of 2 helical transmembrane segments spans residues 8 to 28 (IGAG…GLIF) and 50 to 70 (ILGF…AFLI).

It belongs to the ATPase C chain family. In terms of assembly, F-type ATPases have 2 components, CF(1) - the catalytic core - and CF(0) - the membrane proton channel. CF(1) has five subunits: alpha(3), beta(3), gamma(1), delta(1), epsilon(1). CF(0) has three main subunits: a, b and c.

The protein resides in the mitochondrion membrane. In terms of biological role, mitochondrial membrane ATP synthase (F(1)F(0) ATP synthase or Complex V) produces ATP from ADP in the presence of a proton gradient across the membrane which is generated by electron transport complexes of the respiratory chain. F-type ATPases consist of two structural domains, F(1) - containing the extramembraneous catalytic core and F(0) - containing the membrane proton channel, linked together by a central stalk and a peripheral stalk. During catalysis, ATP synthesis in the catalytic domain of F(1) is coupled via a rotary mechanism of the central stalk subunits to proton translocation. Part of the complex F(0) domain. A homomeric c-ring of probably 10 subunits is part of the complex rotary element. This chain is ATP synthase subunit 9, mitochondrial (atp9), found in Schizosaccharomyces pombe (strain 972 / ATCC 24843) (Fission yeast).